The chain runs to 411 residues: Putative BMP-2-inducible kinase-like protein (411 aa).

Disordered regions lie at residues 1 to 87, 215 to 280, and 392 to 411; these read MIAP…TQDI, SQQQ…RVSQ, and QQSQ…PSKQ. Composition is skewed to basic and acidic residues over residues 8 to 18 and 53 to 68; these read SSEEEGQKDEE and EKRS…KAKY. Positions 47–71 form a coiled coil; that stretch reads EDEEEEEKRSSDSDYEQAKAKYSDM. Basic residues-rich tracts occupy residues 220–234 and 243–258; these read VKQR…RQRR and NGKR…KKTL.

The protein is Putative BMP-2-inducible kinase-like protein (BMP2KL) of Homo sapiens (Human).